Reading from the N-terminus, the 250-residue chain is 2,3-bisphosphoglycerate-dependent phosphoglycerate mutase (250 aa).

Substrate contacts are provided by residues 10-17 (RHGESQWN), 23-24 (TG), Arg-62, 89-92 (ERHY), Lys-100, 116-117 (RR), and 185-186 (GN). His-11 functions as the Tele-phosphohistidine intermediate in the catalytic mechanism. Catalysis depends on Glu-89, which acts as the Proton donor/acceptor.

It belongs to the phosphoglycerate mutase family. BPG-dependent PGAM subfamily. Homodimer.

It catalyses the reaction (2R)-2-phosphoglycerate = (2R)-3-phosphoglycerate. The protein operates within carbohydrate degradation; glycolysis; pyruvate from D-glyceraldehyde 3-phosphate: step 3/5. Catalyzes the interconversion of 2-phosphoglycerate and 3-phosphoglycerate. The polypeptide is 2,3-bisphosphoglycerate-dependent phosphoglycerate mutase (Serratia proteamaculans (strain 568)).